Here is a 55-residue protein sequence, read N- to C-terminus: Large ribosomal subunit protein bL33 (55 aa).

Belongs to the bacterial ribosomal protein bL33 family.

The protein is Large ribosomal subunit protein bL33 of Dehalococcoides mccartyi (strain ATCC BAA-2266 / KCTC 15142 / 195) (Dehalococcoides ethenogenes (strain 195)).